The following is a 225-amino-acid chain: ATP-dependent dethiobiotin synthetase BioD (225 aa).

12–17 (GVGKTV) contributes to the ATP binding site. Mg(2+) is bound at residue Thr-16. Lys-37 is a catalytic residue. Thr-41 contributes to the substrate binding site. Residues Asp-49, 108–111 (EGAG), and 197–199 (PAG) contribute to the ATP site. Mg(2+) contacts are provided by Asp-49 and Glu-108.

It belongs to the dethiobiotin synthetase family. In terms of assembly, homodimer. It depends on Mg(2+) as a cofactor.

It is found in the cytoplasm. It catalyses the reaction (7R,8S)-7,8-diammoniononanoate + CO2 + ATP = (4R,5S)-dethiobiotin + ADP + phosphate + 3 H(+). Its pathway is cofactor biosynthesis; biotin biosynthesis; biotin from 7,8-diaminononanoate: step 1/2. In terms of biological role, catalyzes a mechanistically unusual reaction, the ATP-dependent insertion of CO2 between the N7 and N8 nitrogen atoms of 7,8-diaminopelargonic acid (DAPA, also called 7,8-diammoniononanoate) to form a ureido ring. This is ATP-dependent dethiobiotin synthetase BioD from Mycolicibacterium smegmatis (strain ATCC 700084 / mc(2)155) (Mycobacterium smegmatis).